The chain runs to 488 residues: Ribulose bisphosphate carboxylase large chain (488 aa).

Residues N127 and T177 each contribute to the substrate site. Residue K179 is the Proton acceptor of the active site. Substrate is bound at residue K181. Positions 205, 207, and 208 each coordinate Mg(2+). K205 carries the post-translational modification N6-carboxylysine. The Proton acceptor role is filled by H297. R298, H330, and S382 together coordinate substrate.

The protein belongs to the RuBisCO large chain family. Type I subfamily. Heterohexadecamer of 8 large chains and 8 small chains. Mg(2+) is required as a cofactor.

It localises to the plastid. The protein resides in the chloroplast. It catalyses the reaction 2 (2R)-3-phosphoglycerate + 2 H(+) = D-ribulose 1,5-bisphosphate + CO2 + H2O. The catalysed reaction is D-ribulose 1,5-bisphosphate + O2 = 2-phosphoglycolate + (2R)-3-phosphoglycerate + 2 H(+). Functionally, ruBisCO catalyzes two reactions: the carboxylation of D-ribulose 1,5-bisphosphate, the primary event in carbon dioxide fixation, as well as the oxidative fragmentation of the pentose substrate in the photorespiration process. Both reactions occur simultaneously and in competition at the same active site. This is Ribulose bisphosphate carboxylase large chain from Guillardia theta (Cryptophyte).